Reading from the N-terminus, the 402-residue chain is MDTMANSILGQEITFLKLDTRVIKNFDKVLTNNIEVVETSLWSVVRKNALKKGAAKALQACASSVLHKRSDYEFLTTGNVLRKKIRLPRLFGNKVISAAYSWIKRVQAALLLDYLKEHLSQYDWDQLIVVVFNGSNYPESVLAEASKGFKRVFVEDGFFPGTLQIDPVGINAANSVPRCSAFYKSGRDFSEGGLPTAVTNRSSKRKFTPVDLAPGFVFVPFQVPSDMQVTLHSPWVKDMYNFYDIVVNAAEQNPEEMFVIKEHPRFKRSVIGSRPPHPRVKFANGNITSELISNARTVVTINSTVGIEALLLGKQVITLGDSCYNIQDLVLRGNDMGRLNAALALRGWLPDDELRRQFLGFLWNYYLVKGSFTEPPTALASRILDCFELDSEVRGAIANLNN.

This Sinorhizobium fredii (strain NBRC 101917 / NGR234) protein is Protein FixF (fixF).